A 208-amino-acid chain; its full sequence is Uracil phosphoribosyltransferase (208 aa).

Residues R78, R103, and 130–138 (DPMLATGGS) each bind 5-phospho-alpha-D-ribose 1-diphosphate. Residues I193 and 198-200 (GDA) each bind uracil. 5-phospho-alpha-D-ribose 1-diphosphate is bound at residue D199.

Belongs to the UPRTase family. It depends on Mg(2+) as a cofactor.

The catalysed reaction is UMP + diphosphate = 5-phospho-alpha-D-ribose 1-diphosphate + uracil. Its pathway is pyrimidine metabolism; UMP biosynthesis via salvage pathway; UMP from uracil: step 1/1. With respect to regulation, allosterically activated by GTP. Catalyzes the conversion of uracil and 5-phospho-alpha-D-ribose 1-diphosphate (PRPP) to UMP and diphosphate. This Shewanella sp. (strain ANA-3) protein is Uracil phosphoribosyltransferase.